Consider the following 168-residue polypeptide: Gremlin-2 (168 aa).

The N-terminal stretch at 1 to 21 (MFWKLSLTLLLVAVLVKVAET) is a signal peptide. The N-linked (GlcNAc...) asparagine glycan is linked to asparagine 40. Cystine bridges form between cysteine 73-cysteine 123, cysteine 87-cysteine 137, cysteine 97-cysteine 155, and cysteine 101-cysteine 157. The CTCK domain occupies 73–163 (CKTQPLRQTV…HCRCMSVNLS (91 aa)). The N-linked (GlcNAc...) asparagine glycan is linked to asparagine 161.

This sequence belongs to the DAN family. Homodimer. Interacts with BMP2, BMP4 and BMP7, but has lower affinity for BMP7 than for BMP2 and BMP4. Binds heparin; this impairs the interaction with BMP2. Post-translationally, N-glycosylated. Highly expressed in the ovary, followed by brain, spleen, colon, kidney and uterus. In ovary expressed in granulosa cells of selective early antral follicles.

It localises to the secreted. In terms of biological role, cytokine that inhibits the activity of BMP2 and BMP4 in a dose-dependent manner, and thereby modulates signaling by BMP family members. Contributes to the regulation of embryonic morphogenesis via BMP family members. Antagonizes BMP4-induced suppression of progesterone production in granulosa cells. The protein is Gremlin-2 (Grem2) of Mus musculus (Mouse).